The chain runs to 210 residues: NADH dehydrogenase [ubiquinone] iron-sulfur protein 8, mitochondrial (210 aa).

A mitochondrion-targeting transit peptide spans 1–34 (MRCLTMPTLLRALAQAAHTGPPGGRTLHSSAVAA). 4Fe-4S ferredoxin-type domains follow at residues 102–131 (RRYPSGEERCIACKLCEAVCPAQAITIEAE) and 141–170 (TRYDIDMTKCIYCGFCQEACPVDAIVEGPN). [4Fe-4S] cluster contacts are provided by Cys-111, Cys-114, Cys-117, Cys-121, Cys-150, Cys-153, Cys-156, and Cys-160.

It belongs to the complex I 23 kDa subunit family. Core subunit of respiratory chain NADH dehydrogenase (Complex I) which is composed of 45 different subunits. This is a component of the iron-sulfur (IP) fragment of the enzyme. Interacts with RAB5IF. [4Fe-4S] cluster serves as cofactor.

It localises to the mitochondrion inner membrane. It catalyses the reaction a ubiquinone + NADH + 5 H(+)(in) = a ubiquinol + NAD(+) + 4 H(+)(out). Core subunit of the mitochondrial membrane respiratory chain NADH dehydrogenase (Complex I) which catalyzes electron transfer from NADH through the respiratory chain, using ubiquinone as an electron acceptor. Essential for the catalytic activity and assembly of complex I. This Macaca fascicularis (Crab-eating macaque) protein is NADH dehydrogenase [ubiquinone] iron-sulfur protein 8, mitochondrial (NDUFS8).